The primary structure comprises 125 residues: Histone H2A (125 aa).

Residues 1–18 (MSGRGKGGKAKAKAKSRS) are compositionally biased toward basic residues. The tract at residues 1 to 21 (MSGRGKGGKAKAKAKSRSSRA) is disordered. Position 2 is an N-acetylserine (serine 2). Position 104 is an N5-methylglutamine (glutamine 104).

Belongs to the histone H2A family. In terms of assembly, the nucleosome is a histone octamer containing two molecules each of H2A, H2B, H3 and H4 assembled in one H3-H4 heterotetramer and two H2A-H2B heterodimers. The octamer wraps approximately 147 bp of DNA.

It is found in the nucleus. The protein resides in the chromosome. Functionally, core component of nucleosome. Nucleosomes wrap and compact DNA into chromatin, limiting DNA accessibility to the cellular machineries which require DNA as a template. Histones thereby play a central role in transcription regulation, DNA repair, DNA replication and chromosomal stability. DNA accessibility is regulated via a complex set of post-translational modifications of histones, also called histone code, and nucleosome remodeling. The protein is Histone H2A of Mytilus trossulus (Blue mussel).